A 455-amino-acid polypeptide reads, in one-letter code: MAKKTERAFSCVGCGYVHPKWLGRCPECGEWNSFEETPSLSSGDVRAVKKASSSPVQAFPLCAVRAQDAQRISCGIAEFDRVLGGGAVRRSAIMIGGEPGIGKSTLLLQIAAACGKSVLYVSGEESPGQIRGRADRLNIPIQNIELLCATRVEDVERVLNTRCPTFVIVDSIQTVFSPEAGAIPMTINQLKYCANELIAWVKERDSVLFFTAHVTKDGNIAGPKVVEHMVDTVISFERNEEDIRFLRALKNRFGSVDELGIFTMGENGLSAVQDTAGFFISTRQGMFPVGSATVPVCEGSRVFMVEIQALTVPAKSSVTRVFSDRIDSARVSRVAAVIEKRVGLKFSDQDIYVNVAGGIRLYEPAVDVALAMALYSARQNTPVKTNAAFIGEVSLSGEIRPVRRLKTRLKTAYGLGFSTIYVPIGVEHDTPPPYTLRVVGTLAQTIAEIFSKAKA.

Residues 11 to 28 (CVGCGYVHPKWLGRCPEC) form a C4-type zinc finger. 97–104 (GEPGIGKS) contacts ATP. The RadA KNRFG motif motif lies at 250–254 (KNRFG). The tract at residues 350–455 (DIYVNVAGGI…IAEIFSKAKA (106 aa)) is lon-protease-like.

It belongs to the RecA family. RadA subfamily.

In terms of biological role, DNA-dependent ATPase involved in processing of recombination intermediates, plays a role in repairing DNA breaks. Stimulates the branch migration of RecA-mediated strand transfer reactions, allowing the 3' invading strand to extend heteroduplex DNA faster. Binds ssDNA in the presence of ADP but not other nucleotides, has ATPase activity that is stimulated by ssDNA and various branched DNA structures, but inhibited by SSB. Does not have RecA's homology-searching function. The sequence is that of DNA repair protein RadA from Treponema pallidum (strain Nichols).